The primary structure comprises 473 residues: Cannabinoid receptor 1 (473 aa).

At 1–117 (MKSILDGLAD…CFMILNPSQQ (117 aa)) the chain is on the extracellular side. A required for mitochondrial localization region spans residues 2–23 (KSILDGLADTTFRTITTDLLYV). 2 N-linked (GlcNAc...) asparagine glycosylation sites follow: Asn78 and Asn84. A helical transmembrane segment spans residues 118–143 (LAIAVLSLTLGTFTVLENLLVLCVIL). At 144-155 (HSRSLRCRPSYH) the chain is on the cytoplasmic side. A helical membrane pass occupies residues 156–176 (FIGSLAVADLLGSVIFVYSFV). At 177–188 (DFHVFHRKDSPN) the chain is on the extracellular side. Residues 189–213 (VFLFKLGGVTASFTASVGSLFLTAI) form a helical membrane-spanning segment. The Cytoplasmic segment spans residues 214-233 (DRYISIHRPLAYKRIVTRPK). A helical membrane pass occupies residues 234-256 (AVVAFCLMWTIAIVIAVLPLLGW). Residues 257-274 (NCKKLQSVCSDIFPLIDE) are Extracellular-facing. The helical transmembrane segment at 275-300 (TYLMFWIGVTSVLLLFIVYAYMYILW) threads the bilayer. Over 301-345 (KAHSHAVRMIQRGTQKSIIIHTSEDGKVQVTRPDQARMDIRLAKT) the chain is Cytoplasmic. The helical transmembrane segment at 346–366 (LVLILVVLIICWGPLLAIMVY) threads the bilayer. At 367–378 (DVFGKMNKLIKT) the chain is on the extracellular side. A helical membrane pass occupies residues 379 to 400 (VFAFCSMLCLLNSTVNPIIYAL). Residues 401–473 (RSKDLRHAFR…VSTDTSAEAL (73 aa)) lie on the Cytoplasmic side of the membrane. Cys416 is lipidated: S-palmitoyl cysteine. A phosphoserine mark is found at Ser426 and Ser430.

This sequence belongs to the G-protein coupled receptor 1 family. As to quaternary structure, interacts (via C-terminus) with CNRIP1. Associates with G protein alpha subunits, including G(i) alpha-1/GNAI1, G(i) alpha-3/GNAI3 and G(o)-alpha/GNAO1; palmitoylation is important for interaction with GNAI3 and GNAO1. In terms of processing, palmitoylation at Cys-416 is important for recruitment at both plasma membrane and lipid rafts and association with G protein alpha subunits. As to expression, expressed in the brain, in the striatum, medial septum, descending arm of the band of Broca, the amygdaloid nucleus, the hippocampus and cortex (at protein level). High levels in the lateral striatum. In rostral brain regions, high expression levels in the dorsal lateral striatum, while in the caudal brain regions, high levels are observed in the ventral lateral striatum. Expressed in monocytes/macrophages (at protein level). Expressed in striated muscles and in vascular smooth muscles cells (at protein level).

The protein resides in the cell membrane. It is found in the mitochondrion outer membrane. It localises to the cell projection. Its subcellular location is the axon. The protein localises to the presynapse. Its activity is regulated as follows. Hemopressin, a peptide derived from hemoglobin subunit alpha (HBA1 and/or HBA2), acts as an antagonist peptide: hemopressin-binding efficiently blocks cannabinoid receptor CNR1 and subsequent signaling. Its function is as follows. G-protein coupled receptor for cannabinoids, including endocannabinoids (eCBs), such as N-arachidonoylethanolamide (also called anandamide or AEA) and 2-arachidonoylglycerol (2-AG). Mediates many cannabinoid-induced effects, acting, among others, on food intake, memory loss, gastrointestinal motility, catalepsy, ambulatory activity, anxiety, chronic pain. Signaling typically involves reduction in cyclic AMP. In the hypothalamus, may have a dual effect on mitochondrial respiration depending upon the agonist dose and possibly upon the cell type. Increases respiration at low doses, while decreases respiration at high doses. At high doses, CNR1 signal transduction involves G-protein alpha-i protein activation and subsequent inhibition of mitochondrial soluble adenylate cyclase, decrease in cyclic AMP concentration, inhibition of protein kinase A (PKA)-dependent phosphorylation of specific subunits of the mitochondrial electron transport system, including NDUFS2. In the hypothalamus, inhibits leptin-induced reactive oxygen species (ROS) formation and mediates cannabinoid-induced increase in SREBF1 and FASN gene expression. In response to cannabinoids, drives the release of orexigenic beta-endorphin, but not that of melanocyte-stimulating hormone alpha/alpha-MSH, from hypothalamic POMC neurons, hence promoting food intake. In the hippocampus, regulates cellular respiration and energy production in response to cannabinoids. Involved in cannabinoid-dependent depolarization-induced suppression of inhibition (DSI), a process in which depolarization of CA1 postsynaptic pyramidal neurons mobilizes eCBs, which retrogradely activate presynaptic CB1 receptors, transiently decreasing GABAergic inhibitory neurotransmission. Also reduces excitatory synaptic transmission. In superior cervical ganglions and cerebral vascular smooth muscle cells, inhibits voltage-gated Ca(2+) channels in a constitutive, as well as agonist-dependent manner. Induces leptin production in adipocytes and reduces LRP2-mediated leptin clearance in the kidney, hence participating in hyperleptinemia. In adipose tissue, CNR1 signaling leads to increased expression of SREBF1, ACACA and FASN genes. In the liver, activation by endocannabinoids leads to increased de novo lipogenesis and reduced fatty acid catabolism, associated with increased expression of SREBF1/SREBP-1, GCK, ACACA, ACACB and FASN genes. May also affect de novo cholesterol synthesis and HDL-cholesteryl ether uptake. Peripherally modulates energy metabolism. In high carbohydrate diet-induced obesity, may decrease the expression of mitochondrial dihydrolipoyl dehydrogenase/DLD in striated muscles, as well as that of selected glucose/ pyruvate metabolic enzymes, hence affecting energy expenditure through mitochondrial metabolism. In response to cannabinoid anandamide, elicits a pro-inflammatory response in macrophages, which involves NLRP3 inflammasome activation and IL1B and IL18 secretion. In macrophages infiltrating pancreatic islets, this process may participate in the progression of type-2 diabetes and associated loss of pancreatic beta-cells. This Rattus norvegicus (Rat) protein is Cannabinoid receptor 1 (Cnr1).